A 413-amino-acid chain; its full sequence is Histidine--tRNA ligase (413 aa).

Belongs to the class-II aminoacyl-tRNA synthetase family. Homodimer.

It localises to the cytoplasm. The catalysed reaction is tRNA(His) + L-histidine + ATP = L-histidyl-tRNA(His) + AMP + diphosphate + H(+). This chain is Histidine--tRNA ligase, found in Fusobacterium nucleatum subsp. nucleatum (strain ATCC 25586 / DSM 15643 / BCRC 10681 / CIP 101130 / JCM 8532 / KCTC 2640 / LMG 13131 / VPI 4355).